Consider the following 261-residue polypeptide: Triosephosphate isomerase (261 aa).

A substrate-binding site is contributed by 10–12; it reads NWK. The active-site Electrophile is the His100. Glu172 functions as the Proton acceptor in the catalytic mechanism. Substrate is bound by residues Gly178, Ser218, and 239-240; that span reads GG.

Belongs to the triosephosphate isomerase family. In terms of assembly, homodimer.

The protein resides in the cytoplasm. It carries out the reaction D-glyceraldehyde 3-phosphate = dihydroxyacetone phosphate. It participates in carbohydrate biosynthesis; gluconeogenesis. It functions in the pathway carbohydrate degradation; glycolysis; D-glyceraldehyde 3-phosphate from glycerone phosphate: step 1/1. In terms of biological role, involved in the gluconeogenesis. Catalyzes stereospecifically the conversion of dihydroxyacetone phosphate (DHAP) to D-glyceraldehyde-3-phosphate (G3P). The protein is Triosephosphate isomerase of Mycobacterium sp. (strain JLS).